The following is a 324-amino-acid chain: NADH-dependent D-xylose reductase (324 aa).

Residue Tyr54 is the Proton donor of the active site. A substrate-binding site is contributed by His116. An NAD(+)-binding site is contributed by 220-286 (SSFGPQSFLE…SNSPDRMAQN (67 aa)).

This sequence belongs to the aldo/keto reductase family.

It carries out the reaction xylitol + NAD(+) = D-xylose + NADH + H(+). It catalyses the reaction xylitol + NADP(+) = D-xylose + NADPH + H(+). The protein operates within carbohydrate metabolism; D-xylose degradation. Reduces D-xylose into xylitol. Preferentially utilizes NADH as a cosubstrate. The polypeptide is NADH-dependent D-xylose reductase (XYL1) (Candida parapsilosis (Yeast)).